A 607-amino-acid chain; its full sequence is V-type proton ATPase catalytic subunit A (607 aa).

Residue 251 to 258 (GAFGCGKT) participates in ATP binding.

Belongs to the ATPase alpha/beta chains family. As to quaternary structure, V-ATPase is a heteromultimeric enzyme composed of a peripheral catalytic V1 complex (components A to H) attached to an integral membrane V0 proton pore complex (components: a, c, c', c'', d, e, f and VOA1).

It localises to the vacuole membrane. The catalysed reaction is ATP + H2O + 4 H(+)(in) = ADP + phosphate + 5 H(+)(out). Its function is as follows. Catalytic subunit of the V1 complex of vacuolar(H+)-ATPase (V-ATPase), a multisubunit enzyme composed of a peripheral complex (V1) that hydrolyzes ATP and a membrane integral complex (V0) that translocates protons. V-ATPase is responsible for acidifying and maintaining the pH of intracellular compartments. This chain is V-type proton ATPase catalytic subunit A (VMA1), found in Encephalitozoon cuniculi (strain GB-M1) (Microsporidian parasite).